The chain runs to 1006 residues: Unconventional myosin-Id (1006 aa).

Position 2 is an N-acetylalanine (A2). Positions 9 to 695 (FGKADFVLMD…TLFTLEELRA (687 aa)) constitute a Myosin motor domain. Residue 102–109 (GESGAGKT) participates in ATP binding. S200 carries the phosphoserine modification. Position 536 is a phosphotyrosine (Y536). Residues 572 to 594 (MIALVDNLASKEPYYVRCIKPND) are actin-binding. 2 consecutive IQ domains span residues 699–719 (IRIVLFLQKVWRGTLARMRYK) and 721–741 (TKAALTIIRYYRHYKVKSYIQ). A TH1 domain is found at 812–1005 (GQRADLGLQR…RSGFILSVPG (194 aa)).

This sequence belongs to the TRAFAC class myosin-kinesin ATPase superfamily. Myosin family. In terms of assembly, interacts (via the two IQ motifs) with calmodulin. Binds an additional calmodulin chain via a third, C-terminal region. Interacts with F-actin.

The protein localises to the cytoplasm. It localises to the perikaryon. It is found in the cell projection. The protein resides in the dendrite. Its subcellular location is the early endosome. The protein localises to the cell cortex. Functionally, unconventional myosin that functions as actin-based motor protein with ATPase activity. Plays a role in endosomal protein trafficking, and especially in the transfer of cargo proteins from early to recycling endosomes. Required for normal planar cell polarity in ciliated tracheal cells, for normal rotational polarity of cilia, and for coordinated, unidirectional ciliary movement in the trachea. Required for normal, polarized cilia organization in brain ependymal epithelial cells. This Canis lupus familiaris (Dog) protein is Unconventional myosin-Id (MYO1D).